The chain runs to 348 residues: Replication-associated protein (348 aa).

A compositionally biased stretch (low complexity) spans 1–17 (MRAPASSAASNRPGPSN). Residues 1–22 (MRAPASSAASNRPGPSNHPTPR) form a disordered region. Residues 22–125 (RWNSKQFFLT…NGDSDEMGEL (104 aa)) enclose the CRESS-DNA virus Rep endonuclease domain. The short motif at 29 to 32 (FLTY) is the RCR-1 element. Residues Glu-63, His-71, and His-73 each contribute to the a divalent metal cation site. Residues 71–73 (HLH) carry the RCR-2 motif. Residue Tyr-111 is the For DNA cleavage activity of the active site. The short motif at 111 to 114 (YISK) is the RCR-3 element. An oligomerization region spans residues 176 to 188 (SAAALFTEPPPVY). 228–235 (GPSRTGKT) is an ATP binding site. The interval 251 to 269 (VDFTHYDKDAIYNVIDDVP) is transactivation. A Nuclear localization signal motif is present at residues 291-301 (KYGKKKKIPGG).

Belongs to the geminiviridae Rep protein family. Homooligomer. Rep binds to repeated DNA motifs (iterons). Forms the O-complex, which is a Rep-DNA complex involved in the initiation of RCR. Part of the C- and V-complexes which are RepA-Rep-DNA complexes involved in the c-sense and v-sense transcription. The cofactor is Mg(2+). Mn(2+) serves as cofactor.

Its subcellular location is the host nucleus. Its function is as follows. Essential for the replication of viral ssDNA. The closed circular ssDNA genome is first converted to a superhelical dsDNA. Rep binds a specific region at the genome origin of replication. It introduces an endonucleolytic nick within the conserved sequence 5'-TAATATTAC-3' in the intergenic region of the genome present in all geminiviruses, thereby initiating the rolling circle replication (RCR). Following cleavage, binds covalently to the 5'-phosphate of DNA as a tyrosyl ester. The cleavage gives rise to a free 3'-OH that serves as a primer for the cellular DNA polymerase. The polymerase synthesizes the (+) strand DNA by rolling circle mechanism. After one round of replication, a Rep-catalyzed nucleotidyl transfer reaction releases a circular single-stranded virus genome, thereby terminating the replication. Displays origin-specific DNA cleavage, nucleotidyl transferase, ATPase and helicase activities. Acts as an inhibitor of C-sense gene transcription. This Miscanthus streak virus (isolate 91) (MiSV) protein is Replication-associated protein.